Here is a 533-residue protein sequence, read N- to C-terminus: CTP synthase (533 aa).

Positions 1 to 265 are amidoligase domain; that stretch reads MTKFIFVTGG…ARYLVRRLGL (265 aa). Ser13 provides a ligand contact to CTP. Ser13 provides a ligand contact to UTP. Residue 14-19 participates in ATP binding; the sequence is GLGKGI. An L-glutamine-binding site is contributed by Tyr54. Asp71 is a binding site for ATP. The Mg(2+) site is built by Asp71 and Glu139. CTP-binding positions include 146 to 148, 186 to 191, and Lys222; these read DIE and KTKPTQ. UTP contacts are provided by residues 186-191 and Lys222; that span reads KTKPTQ. A Glutamine amidotransferase type-1 domain is found at 290 to 532; that stretch reads EIAIVGKYVK…VRAARERKYG (243 aa). L-glutamine is bound at residue Gly351. Catalysis depends on Cys378, which acts as the Nucleophile; for glutamine hydrolysis. Residues 379–382, Glu402, and Arg459 contribute to the L-glutamine site; that span reads FGFQ. Active-site residues include His505 and Glu507.

It belongs to the CTP synthase family. In terms of assembly, homotetramer.

It catalyses the reaction UTP + L-glutamine + ATP + H2O = CTP + L-glutamate + ADP + phosphate + 2 H(+). It carries out the reaction L-glutamine + H2O = L-glutamate + NH4(+). The catalysed reaction is UTP + NH4(+) + ATP = CTP + ADP + phosphate + 2 H(+). It functions in the pathway pyrimidine metabolism; CTP biosynthesis via de novo pathway; CTP from UDP: step 2/2. Its activity is regulated as follows. Allosterically activated by GTP, when glutamine is the substrate; GTP has no effect on the reaction when ammonia is the substrate. The allosteric effector GTP functions by stabilizing the protein conformation that binds the tetrahedral intermediate(s) formed during glutamine hydrolysis. Inhibited by the product CTP, via allosteric rather than competitive inhibition. Catalyzes the ATP-dependent amination of UTP to CTP with either L-glutamine or ammonia as the source of nitrogen. Regulates intracellular CTP levels through interactions with the four ribonucleotide triphosphates. This is CTP synthase from Thermococcus gammatolerans (strain DSM 15229 / JCM 11827 / EJ3).